Here is a 291-residue protein sequence, read N- to C-terminus: MAPRKRFRLLELGSPTHSKRKVQKPLQEKTPNLRVSPLAFKIGKEIKNKEIRKTKKTESENIFNSKHVDLRLESPHPGLNFVSDAQQYSKAGDVRYLKNKSSNTLKNERQTIERPSFDNSLRFEDIEQPPKSTSTPVLSQSSQINVEREAPMFPVPYYIAPSPMYNFSPYQNFVGNPTFLTPSHNPNLNYAIPIQRPELLYPNVNVYDSPLFKKTRLPHQTKSLDKEKNYQYLPIYPVSISNNGDFVGQETPRAAPKLSKKRLSNTLDVNCSDYESSGQNATYNDSESSLN.

Disordered regions lie at residues 1–30, 116–143, and 271–291; these read MAPR…QEKT, SFDN…QSSQ, and CSDY…SSLN. Residues 3–6 carry the Nuclear localization signal motif; the sequence is PRKR. Residues 116-125 show a composition bias toward basic and acidic residues; it reads SFDNSLRFED. A compositionally biased stretch (polar residues) spans 130–143; sequence PKSTSTPVLSQSSQ.

It is found in the nucleus. Its function is as follows. Required for meiosis I segmentation. Probably acts as a regulator of kinetochore function during meiosis I: required both for mono-orientation of kinetochores on sister chromosomes and protection of centromeric cohesin from separase-mediated cleavage. In Saccharomyces cerevisiae (strain ATCC 204508 / S288c) (Baker's yeast), this protein is Meiosis-specific protein SPO13 (SPO13).